A 182-amino-acid chain; its full sequence is Peptide deformylase (182 aa).

Cys-110 and His-153 together coordinate Fe cation. Glu-154 is a catalytic residue. His-157 contributes to the Fe cation binding site.

This sequence belongs to the polypeptide deformylase family. Fe(2+) serves as cofactor.

It carries out the reaction N-terminal N-formyl-L-methionyl-[peptide] + H2O = N-terminal L-methionyl-[peptide] + formate. Removes the formyl group from the N-terminal Met of newly synthesized proteins. Requires at least a dipeptide for an efficient rate of reaction. N-terminal L-methionine is a prerequisite for activity but the enzyme has broad specificity at other positions. The chain is Peptide deformylase from Halalkalibacterium halodurans (strain ATCC BAA-125 / DSM 18197 / FERM 7344 / JCM 9153 / C-125) (Bacillus halodurans).